We begin with the raw amino-acid sequence, 197 residues long: Putative manganese efflux pump MntP 1 (197 aa).

6 helical membrane passes run valine 8–alanine 28, valine 43–leucine 63, valine 66–leucine 86, leucine 123–leucine 143, tryptophan 146–leucine 166, and aspartate 176–isoleucine 196.

The protein belongs to the MntP (TC 9.B.29) family.

It is found in the cell inner membrane. In terms of biological role, probably functions as a manganese efflux pump. This Psychrobacter cryohalolentis (strain ATCC BAA-1226 / DSM 17306 / VKM B-2378 / K5) protein is Putative manganese efflux pump MntP 1.